A 435-amino-acid polypeptide reads, in one-letter code: AMSH-like protease sst2 (435 aa).

Positions threonine 162–glutamine 181 are enriched in low complexity. Residues threonine 162–proline 185 form a disordered region. At threonine 192 the chain carries Phosphothreonine. Residues threonine 262 to glutamine 392 enclose the MPN domain. Histidine 341, histidine 343, aspartate 354, histidine 356, cysteine 397, histidine 404, and histidine 406 together coordinate Zn(2+). A JAMM motif motif is present at residues histidine 341–aspartate 354.

The protein belongs to the peptidase M67C family. Zn(2+) serves as cofactor.

The protein localises to the cytoplasm. It is found in the endosome. Its function is as follows. Zinc metalloprotease that specifically cleaves 'Lys-63'-linked polyubiquitin chains. Does not cleave 'Lys-48'-linked polyubiquitin chains. Plays a role in the multivesicular body (MVB) sorting pathway. Required for ubiquitin-dependent sorting of proteins into the endosome and subsequent trafficking to the vacuole. May regulate MVB sorting through deubiquitination of ubiquitinated ESCRT proteins. In Schizosaccharomyces pombe (strain 972 / ATCC 24843) (Fission yeast), this protein is AMSH-like protease sst2 (sst2).